The primary structure comprises 114 residues: Ribonuclease P protein component (114 aa).

Belongs to the RnpA family. In terms of assembly, consists of a catalytic RNA component (M1 or rnpB) and a protein subunit.

The enzyme catalyses Endonucleolytic cleavage of RNA, removing 5'-extranucleotides from tRNA precursor.. Functionally, RNaseP catalyzes the removal of the 5'-leader sequence from pre-tRNA to produce the mature 5'-terminus. It can also cleave other RNA substrates such as 4.5S RNA. The protein component plays an auxiliary but essential role in vivo by binding to the 5'-leader sequence and broadening the substrate specificity of the ribozyme. The protein is Ribonuclease P protein component of Exiguobacterium sp. (strain ATCC BAA-1283 / AT1b).